The primary structure comprises 423 residues: Glycine amidinotransferase, mitochondrial (423 aa).

The transit peptide at 1-43 (MLRVRCLRGGSRGAEALHYIGSRLGRTVTGWVQRTFQSTQAAT) directs the protein to the mitochondrion. Phosphoserine is present on residues S46 and S49. D170 is a binding site for arginine. Catalysis depends on residues D254 and H303. D305, R322, S354, and S355 together coordinate arginine. K385 bears the N6-acetyllysine mark. The active-site Amidino-cysteine intermediate is C407.

It belongs to the amidinotransferase family. In terms of assembly, homodimer.

It localises to the mitochondrion inner membrane. The enzyme catalyses L-arginine + glycine = guanidinoacetate + L-ornithine. The catalysed reaction is 4-aminobutanoate + L-arginine = 4-guanidinobutanoate + L-ornithine. It catalyses the reaction beta-alanine + L-arginine = 3-guanidinopropanoate + L-ornithine. It carries out the reaction taurine + L-arginine = taurocyamine + L-ornithine. It participates in amine and polyamine biosynthesis; creatine biosynthesis; creatine from L-arginine and glycine: step 1/2. In terms of biological role, transamidinase that catalyzes the transfer of the amidino group of L-arginine onto the amino moiety of acceptor metabolites such as glycine, beta-alanine, gamma-aminobutyric acid (GABA) and taurine yielding the corresponding guanidine derivatives. Catalyzes the rate-limiting step of creatine biosynthesis, namely the transfer of the amidino group from L-arginine to glycine to generate guanidinoacetate, which is then methylated by GAMT to form creatine. Provides creatine as a source for ATP generation in tissues with high energy demands, in particular skeletal muscle, heart and brain. The polypeptide is Glycine amidinotransferase, mitochondrial (GATM) (Bos taurus (Bovine)).